The sequence spans 192 residues: N-terminal acetyltransferase A complex catalytic subunit NAA10 (192 aa).

Residues 2-152 (VCIRRATVDD…DAYDMRKNLK (151 aa)) form the N-acetyltransferase domain.

Belongs to the acetyltransferase family. ARD1 subfamily. In terms of assembly, part of the NatA complex. Interacts with NAA15. In terms of tissue distribution, expressed in leaves, roots, shoots and flowers.

It carries out the reaction N-terminal glycyl-[protein] + acetyl-CoA = N-terminal N(alpha)-acetylglycyl-[protein] + CoA + H(+). It catalyses the reaction N-terminal L-alanyl-[protein] + acetyl-CoA = N-terminal N(alpha)-acetyl-L-alanyl-[protein] + CoA + H(+). The enzyme catalyses N-terminal L-seryl-[protein] + acetyl-CoA = N-terminal N(alpha)-acetyl-L-seryl-[protein] + CoA + H(+). The catalysed reaction is N-terminal L-valyl-[protein] + acetyl-CoA = N-terminal N(alpha)-acetyl-L-valyl-[protein] + CoA + H(+). It carries out the reaction N-terminal L-cysteinyl-[protein] + acetyl-CoA = N-terminal N(alpha)-acetyl-L-cysteinyl-[protein] + CoA + H(+). It catalyses the reaction N-terminal L-threonyl-[protein] + acetyl-CoA = N-terminal N(alpha)-acetyl-L-threonyl-[protein] + CoA + H(+). Its function is as follows. Catalytic subunit of the NatA N-alpha-acetyltransferase complex. Required for male gametocyte development, embryogenesis, suspensor development and the formation of the quiescent center (QC) in the root meristem. Involved in plant immunity through the regulation of SNC1 and RPM1 stability. The polypeptide is N-terminal acetyltransferase A complex catalytic subunit NAA10 (Arabidopsis thaliana (Mouse-ear cress)).